The following is a 175-amino-acid chain: Cyclic pyranopterin monophosphate synthase (175 aa).

Substrate contacts are provided by residues 78–80 (LCH) and 125–126 (ME). Residue aspartate 140 is part of the active site.

The protein belongs to the MoaC family. In terms of assembly, homohexamer; trimer of dimers.

The enzyme catalyses (8S)-3',8-cyclo-7,8-dihydroguanosine 5'-triphosphate = cyclic pyranopterin phosphate + diphosphate. It participates in cofactor biosynthesis; molybdopterin biosynthesis. Its function is as follows. Catalyzes the conversion of (8S)-3',8-cyclo-7,8-dihydroguanosine 5'-triphosphate to cyclic pyranopterin monophosphate (cPMP). The polypeptide is Cyclic pyranopterin monophosphate synthase (Rhodopirellula baltica (strain DSM 10527 / NCIMB 13988 / SH1)).